A 609-amino-acid polypeptide reads, in one-letter code: UvrABC system protein C (609 aa).

A GIY-YIG domain is found at T15 to V92. Residues D202–L237 enclose the UVR domain.

The protein belongs to the UvrC family. Interacts with UvrB in an incision complex.

The protein resides in the cytoplasm. The UvrABC repair system catalyzes the recognition and processing of DNA lesions. UvrC both incises the 5' and 3' sides of the lesion. The N-terminal half is responsible for the 3' incision and the C-terminal half is responsible for the 5' incision. This chain is UvrABC system protein C, found in Coxiella burnetii (strain RSA 331 / Henzerling II).